We begin with the raw amino-acid sequence, 764 residues long: Palmitoyltransferase AKR1 (764 aa).

Disordered regions lie at residues 1–38 (MVNE…GDSN) and 51–71 (SGNE…AEED). Residues 1-321 (MVNELENVPR…IKKWFKKSQH (321 aa)) are Cytoplasmic-facing. The span at 10–27 (RASTLTNEEQTVDPSNND) shows a compositional bias: polar residues. Serine 51 and serine 57 each carry phosphoserine. 6 ANK repeats span residues 72–102 (PLLT…EVNN), 108–137 (EHIT…DVNA), 142–171 (LHAT…DPTM), 175–204 (QGFN…SKGL), 213–242 (KGRT…SIKI), and 246–275 (EGFT…DFFQ). A helical transmembrane segment spans residues 322 to 341 (AKLVTFITPFLFLGIAFALF). Topologically, residues 342–346 (SHINP) are lumenal. Residues 347–364 (LFVIIVLFLLAIATNKGL) form a helical membrane-spanning segment. Residues 365-384 (NKFVLPSYGRMGVHNVTLLR) lie on the Cytoplasmic side of the membrane. A helical membrane pass occupies residues 385-405 (SPLLSGVFFGTLLWVTIVWFF). Residues 406–418 (KVMPRTFSDEQYT) are Lumenal-facing. The chain crosses the membrane as a helical span at residues 419-439 (NILMLVILVSVFYLFGQLVIM). Over 440 to 513 (DPGCLPEETD…FNDVGLKNHK (74 aa)) the chain is Cytoplasmic. The region spanning 470–520 (NFCIETWIRKPLRSKFSPLNNAVVARFDHYCPWIFNDVGLKNHKAFIFFIT) is the DHHC domain. Cysteine 500 (S-palmitoyl cysteine intermediate) is an active-site residue. A helical transmembrane segment spans residues 514–534 (AFIFFITLMESGIFTFLALCL). Over 535 to 570 (EYFDELEDAHEDTSQKNGKCFILGASDLCSGLIYDR) the chain is Lumenal. Residues 571–591 (FVFLILLWALLQSIWVASLIF) form a helical membrane-spanning segment. At 592-764 (VQAFQICKGM…KDVEQGNDMV (173 aa)) the chain is on the cytoplasmic side.

This sequence belongs to the DHHC palmitoyltransferase family. AKR/ZDHHC17 subfamily.

Its subcellular location is the early endosome membrane. It is found in the golgi apparatus membrane. It catalyses the reaction L-cysteinyl-[protein] + hexadecanoyl-CoA = S-hexadecanoyl-L-cysteinyl-[protein] + CoA. Palmitoyltransferase specific for casein kinase 1. Palmitoylates isoforms YCK1 and YCK2 at both C-terminal cysteine residues, which is required for their proper plasma membrane localization. Required for constitutive endocytosis of a-factor receptor STE3 and both constitutive and pheromone-induced endocytosis of alpha-factor receptor STE2. This chain is Palmitoyltransferase AKR1 (AKR1), found in Saccharomyces cerevisiae (strain ATCC 204508 / S288c) (Baker's yeast).